Here is an 817-residue protein sequence, read N- to C-terminus: MAGAPAPPPPPPPPALGGSAPKPAKSVMQGRDALLGDIRKGMKLKKAETNDRSAPIVGGGVVSSASGSSGTVSSKGPSMSAPPIPGMGAPQLGDILAGGIPKLKHINNNASTKPSPSASAPPIPGAVPSVAAPPIPNAPLSPAPAVPSIPSSSAPPIPDIPSSAAPPIPIVPSSPAPPLPLSGASAPKVPQNRPHMPSVRPAHRSHQRKSSNISLPSVSAPPLPSASLPTHVSNPPQAPPPPPTPTIGLDSKNIKPTDNAVSPPSSEVPAGGLPFLAEINARRSERGAVEGVSSTKIQTENHKSPSQPPLPSSAPPIPTSHAPPLPPTAPPPPSLPNVTSAPKKATSAPAPPPPPLPAAMSSASTNSVKATPVPPTLAPPLPNTTSVPPNKASSMPAPPPPPPPPPGAFSTSSALSASSIPLAPLPPPPPPSVATSVPSAPPPPPTLTTNKPSASSKQSKISSSSSSSAVTPGGPLPFLAEIQKKRDDRFVVGGDTGYTTQDKQEDVIGSSKDDNVRPSPISPSINPPKQSSQNGMSFLDEIESKLHKQTSSNAFNAPPPHTDAMAPPLPPSAPPPPITSLPTPTASGDDHTNDKSETVLGMKKAKAPALPGHVPPPPVPPVLSDDSKNNVPAASLLHDVLPSSNLEKPPSPPVAAAPPLPTFSAPSLPQQSVSTSIPSPPPVAPTLSVRTETESISKNPTKSPPPPPSPSTMDTGTSNSPSKNLKQRLFSTGGSTLQHKHNTHTNQPDVDVGRYTIGGSNSIVGAKSGNERIVIDDSRFKWTNVSQMPKPRPFQNKTKLYPSGKGSSVPLDLTLFT.

Pro residues predominate over residues 1-15 (MAGAPAPPPPPPPPA). Positions 1 to 752 (MAGAPAPPPP…THTNQPDVDV (752 aa)) are disordered. In terms of domain architecture, WH2 1 spans 30 to 47 (GRDALLGDIRKGMKLKKA). A compositionally biased stretch (basic and acidic residues) spans 37–51 (DIRKGMKLKKAETND). The segment covering 62–79 (VSSASGSSGTVSSKGPSM) has biased composition (low complexity). A WH2 2 domain is found at 87–106 (MGAPQLGDILAGGIPKLKHI). An N-linked (GlcNAc...) asparagine glycan is attached at Asn109. Over residues 119 to 180 (SAPPIPGAVP…VPSSPAPPLP (62 aa)) the composition is skewed to pro residues. N-linked (GlcNAc...) asparagine glycosylation is present at Asn212. Pro residues predominate over residues 236–245 (PQAPPPPPTP). The segment covering 254–265 (IKPTDNAVSPPS) has biased composition (polar residues). The segment covering 306-335 (SQPPLPSSAPPIPTSHAPPLPPTAPPPPSL) has biased composition (pro residues). Over residues 336–348 (PNVTSAPKKATSA) the composition is skewed to low complexity. N-linked (GlcNAc...) asparagine glycosylation is present at Asn337. Pro residues predominate over residues 372–382 (PVPPTLAPPLP). N-linked (GlcNAc...) asparagine glycosylation occurs at Asn383. A compositionally biased stretch (low complexity) spans 383-395 (NTTSVPPNKASSM). Residues 396-407 (PAPPPPPPPPPG) are compositionally biased toward pro residues. Residues 408–422 (AFSTSSALSASSIPL) show a composition bias toward low complexity. Pro residues predominate over residues 423–432 (APLPPPPPPS). The span at 447–469 (LTTNKPSASSKQSKISSSSSSSA) shows a compositional bias: low complexity. Positions 502 to 516 (DKQEDVIGSSKDDNV) are enriched in basic and acidic residues. Low complexity predominate over residues 518–534 (PSPISPSINPPKQSSQN). At Ser519 the chain carries Phosphoserine. A compositionally biased stretch (pro residues) spans 557–579 (APPPHTDAMAPPLPPSAPPPPIT). A compositionally biased stretch (basic and acidic residues) spans 588-597 (GDDHTNDKSE). A compositionally biased stretch (pro residues) spans 649-661 (PPSPPVAAAPPLP). The span at 713-737 (MDTGTSNSPSKNLKQRLFSTGGSTL) shows a compositional bias: polar residues. Ser762 carries the post-translational modification Phosphoserine. N-linked (GlcNAc...) asparagine glycosylation is found at Asn784 and Asn796. A disordered region spans residues 786–806 (SQMPKPRPFQNKTKLYPSGKG).

Belongs to the verprolin family. N-glycosylated.

The protein resides in the cytoplasm. It localises to the cytoskeleton. Its function is as follows. Involved in cytoskeletal organization and cellular growth. May exert its effects on the cytoskeleton directly, or indirectly via proline-binding proteins (e.g. profilin) or proteins possessing SH3 domains. The chain is Verprolin (VRP1) from Saccharomyces cerevisiae (strain ATCC 204508 / S288c) (Baker's yeast).